A 170-amino-acid polypeptide reads, in one-letter code: MVPAQHRPPDRPGDPAHDPGRGRRLGIDVGAARIGVACSDPDAILATPVETVRRDRSGKHLRRLAALAAELEAVEVIVGLPRTLADRIGRSAQDAIELAEALARRVSPTPVRLADERLTTVSAQRSLRQAGVRASEQRAVIDQAAAVAILQSWLDERLAAMAGTQEGSDA.

The tract at residues 1–25 (MVPAQHRPPDRPGDPAHDPGRGRRL) is disordered. Residues 7 to 21 (RPPDRPGDPAHDPGR) show a composition bias toward basic and acidic residues.

Belongs to the YqgF nuclease family.

Its subcellular location is the cytoplasm. In terms of biological role, could be a nuclease involved in processing of the 5'-end of pre-16S rRNA. This is Putative pre-16S rRNA nuclease from Mycobacterium tuberculosis (strain ATCC 25177 / H37Ra).